The primary structure comprises 393 residues: 1-deoxy-D-xylulose 5-phosphate reductoisomerase (393 aa).

Residues Thr-13, Gly-14, Ser-15, Ile-16, and Asn-128 each coordinate NADPH. Residue Lys-129 coordinates 1-deoxy-D-xylulose 5-phosphate. Glu-130 is an NADPH binding site. Asp-154 lines the Mn(2+) pocket. Ser-155, Glu-156, Ser-178, and His-201 together coordinate 1-deoxy-D-xylulose 5-phosphate. Position 156 (Glu-156) interacts with Mn(2+). Gly-207 contacts NADPH. Residues Ser-214, Asn-219, Lys-220, and Glu-223 each contribute to the 1-deoxy-D-xylulose 5-phosphate site. Glu-223 serves as a coordination point for Mn(2+).

This sequence belongs to the DXR family. Requires Mg(2+) as cofactor. The cofactor is Mn(2+).

It carries out the reaction 2-C-methyl-D-erythritol 4-phosphate + NADP(+) = 1-deoxy-D-xylulose 5-phosphate + NADPH + H(+). The protein operates within isoprenoid biosynthesis; isopentenyl diphosphate biosynthesis via DXP pathway; isopentenyl diphosphate from 1-deoxy-D-xylulose 5-phosphate: step 1/6. Its function is as follows. Catalyzes the NADPH-dependent rearrangement and reduction of 1-deoxy-D-xylulose-5-phosphate (DXP) to 2-C-methyl-D-erythritol 4-phosphate (MEP). The polypeptide is 1-deoxy-D-xylulose 5-phosphate reductoisomerase (Acidithiobacillus ferrooxidans (strain ATCC 23270 / DSM 14882 / CIP 104768 / NCIMB 8455) (Ferrobacillus ferrooxidans (strain ATCC 23270))).